A 71-amino-acid chain; its full sequence is Small ribosomal subunit protein bS21 (71 aa).

The disordered stretch occupies residues 48-71; it reads ENATLAKRHAKRNARENARNTRLY. Residues 60-71 are compositionally biased toward basic and acidic residues; it reads NARENARNTRLY.

The protein belongs to the bacterial ribosomal protein bS21 family.

The chain is Small ribosomal subunit protein bS21 from Haemophilus influenzae (strain 86-028NP).